A 514-amino-acid chain; its full sequence is MWDVIDLSRWQFALTALYHFLFVPLTLGLIFLLAIMETIYVVTGKTIYRDMTRFWGKLFGINFALGVATGLTMEFQFGTNWSFYSNYVGDIFGAPLAMEALMAFFLESTFVGLFFFGWQRLNKYQHLLVTWLVAFGSNLSALWILNANGWMQYPTGAHFDIDTLRMEMTSFSELVFNPVSQVKFVHTVMAGYVTGAMFIMAISAWYLLRGRERNVALRSFAIGSVFGTLAIIGTLQLGDSSAYEVAQVQPVKLAAMEGEWQTEPAPAPFHVVAWPEQDQERNAFALKIPALLGILATHSLDKPVPGLKNLMAETYPRLQRGRMAWLLMQEISQGNREPHVLQAFRGLEGDLGYGMLLSRYAPDMNHVTAAQYQAAMRGAIPQVAPVFWSFRIMVGCGSLLLLVMLIALVQTLRGKIDQHRWVLKMALWSLPLPWIAIEAGWFMTEFGRQPWAIQDILPTYSAHSALTTGQLAFSLIMIVGLYTLFLIAEVYLMQKYARLGPSAMQSEQPTQQQG.

Over 1 to 22 the chain is Cytoplasmic; that stretch reads MWDVIDLSRWQFALTALYHFLF. His-19 lines the heme pocket. Residues 23 to 42 form a helical membrane-spanning segment; sequence VPLTLGLIFLLAIMETIYVV. Over 43-94 the chain is Periplasmic; that stretch reads TGKTIYRDMTRFWGKLFGINFALGVATGLTMEFQFGTNWSFYSNYVGDIFGA. Residues 95-114 traverse the membrane as a helical segment; the sequence is PLAMEALMAFFLESTFVGLF. At 115–129 the chain is on the cytoplasmic side; sequence FFGWQRLNKYQHLLV. A helical membrane pass occupies residues 130–149; that stretch reads TWLVAFGSNLSALWILNANG. Residues 150–187 lie on the Periplasmic side of the membrane; sequence WMQYPTGAHFDIDTLRMEMTSFSELVFNPVSQVKFVHT. Heme is bound at residue His-186. The chain crosses the membrane as a helical span at residues 188–207; that stretch reads VMAGYVTGAMFIMAISAWYL. Over 208–219 the chain is Cytoplasmic; sequence LRGRERNVALRS. The helical transmembrane segment at 220–239 threads the bilayer; the sequence is FAIGSVFGTLAIIGTLQLGD. Residues 240–392 are Periplasmic-facing; it reads SSAYEVAQVQ…VAPVFWSFRI (153 aa). Met-393 is a heme binding site. Residues 393–412 traverse the membrane as a helical segment; the sequence is MVGCGSLLLLVMLIALVQTL. Over 413–470 the chain is Cytoplasmic; sequence RGKIDQHRWVLKMALWSLPLPWIAIEAGWFMTEFGRQPWAIQDILPTYSAHSALTTGQ. Residues 471–490 traverse the membrane as a helical segment; sequence LAFSLIMIVGLYTLFLIAEV. Over 491–514 the chain is Periplasmic; the sequence is YLMQKYARLGPSAMQSEQPTQQQG.

Belongs to the cytochrome ubiquinol oxidase subunit 1 family. In terms of assembly, heterodimer of subunits I and II. It depends on heme as a cofactor. Post-translationally, the N-terminus is blocked.

The protein localises to the cell inner membrane. It carries out the reaction 2 a ubiquinol + O2 + n H(+)(in) = 2 a ubiquinone + 2 H2O + n H(+)(out). It functions in the pathway energy metabolism; oxidative phosphorylation. With respect to regulation, inhibited by cyanide; is more sensitive to cyanide than cytochrome bd-I oxidase. Its function is as follows. A terminal oxidase that catalyzes quinol-dependent, Na(+)-independent oxygen uptake. Prefers menadiol over other quinols although ubiquinol was not tested. Generates a proton motive force using protons and electrons from opposite sides of the membrane to generate H(2)O, transferring 1 proton/electron. The protein is Cytochrome bd-II ubiquinol oxidase subunit 1 (appC) of Escherichia coli (strain K12).